Reading from the N-terminus, the 369-residue chain is Phospho-N-acetylmuramoyl-pentapeptide-transferase (369 aa).

Helical transmembrane passes span 2-22 (IALL…TPLF), 55-75 (TVVV…MWMM), 86-106 (GLLL…DDFI), 120-140 (AKLI…LQFP), 163-183 (LAFG…NLII), 196-216 (LDGL…IMGI), 239-259 (PMDL…FLWW), 266-286 (IFMG…FAIL), 291-311 (LLLA…IIQV), and 348-368 (ILAG…WVVL).

It belongs to the glycosyltransferase 4 family. MraY subfamily. The cofactor is Mg(2+).

It localises to the cell membrane. The enzyme catalyses UDP-N-acetyl-alpha-D-muramoyl-L-alanyl-gamma-D-glutamyl-meso-2,6-diaminopimeloyl-D-alanyl-D-alanine + di-trans,octa-cis-undecaprenyl phosphate = di-trans,octa-cis-undecaprenyl diphospho-N-acetyl-alpha-D-muramoyl-L-alanyl-D-glutamyl-meso-2,6-diaminopimeloyl-D-alanyl-D-alanine + UMP. It functions in the pathway cell wall biogenesis; peptidoglycan biosynthesis. Functionally, catalyzes the initial step of the lipid cycle reactions in the biosynthesis of the cell wall peptidoglycan: transfers peptidoglycan precursor phospho-MurNAc-pentapeptide from UDP-MurNAc-pentapeptide onto the lipid carrier undecaprenyl phosphate, yielding undecaprenyl-pyrophosphoryl-MurNAc-pentapeptide, known as lipid I. The protein is Phospho-N-acetylmuramoyl-pentapeptide-transferase of Paenarthrobacter aurescens (strain TC1).